The primary structure comprises 47 residues: Large ribosomal subunit protein bL33 (47 aa).

This sequence belongs to the bacterial ribosomal protein bL33 family.

The polypeptide is Large ribosomal subunit protein bL33 (Staphylococcus capitis).